The primary structure comprises 201 residues: 3-isopropylmalate dehydratase small subunit (201 aa).

Belongs to the LeuD family. LeuD type 1 subfamily. Heterodimer of LeuC and LeuD.

The catalysed reaction is (2R,3S)-3-isopropylmalate = (2S)-2-isopropylmalate. It participates in amino-acid biosynthesis; L-leucine biosynthesis; L-leucine from 3-methyl-2-oxobutanoate: step 2/4. Catalyzes the isomerization between 2-isopropylmalate and 3-isopropylmalate, via the formation of 2-isopropylmaleate. The chain is 3-isopropylmalate dehydratase small subunit from Rhodopseudomonas palustris (strain ATCC BAA-98 / CGA009).